Here is a 37-residue protein sequence, read N- to C-terminus: Cytochrome b6-f complex subunit 5 (37 aa).

A helical membrane pass occupies residues Leu-5 to Ala-25.

This sequence belongs to the PetG family. As to quaternary structure, the 4 large subunits of the cytochrome b6-f complex are cytochrome b6, subunit IV (17 kDa polypeptide, PetD), cytochrome f and the Rieske protein, while the 4 small subunits are PetG, PetL, PetM and PetN. The complex functions as a dimer.

The protein localises to the plastid. It localises to the chloroplast thylakoid membrane. Component of the cytochrome b6-f complex, which mediates electron transfer between photosystem II (PSII) and photosystem I (PSI), cyclic electron flow around PSI, and state transitions. PetG is required for either the stability or assembly of the cytochrome b6-f complex. This is Cytochrome b6-f complex subunit 5 from Welwitschia mirabilis (Tree tumbo).